A 166-amino-acid polypeptide reads, in one-letter code: Phosphopantetheine adenylyltransferase (166 aa).

Residue S9 participates in substrate binding. ATP contacts are provided by residues 9–10 (SY) and H17. Positions 41, 75, and 89 each coordinate substrate. ATP-binding positions include 90 to 92 (GLR), E100, and 124 to 130 (LEHISSS).

This sequence belongs to the bacterial CoaD family. In terms of assembly, homohexamer. Requires Mg(2+) as cofactor.

It localises to the cytoplasm. The catalysed reaction is (R)-4'-phosphopantetheine + ATP + H(+) = 3'-dephospho-CoA + diphosphate. The protein operates within cofactor biosynthesis; coenzyme A biosynthesis; CoA from (R)-pantothenate: step 4/5. In terms of biological role, reversibly transfers an adenylyl group from ATP to 4'-phosphopantetheine, yielding dephospho-CoA (dPCoA) and pyrophosphate. This Bifidobacterium longum (strain DJO10A) protein is Phosphopantetheine adenylyltransferase.